A 533-amino-acid polypeptide reads, in one-letter code: Protein mono-ADP-ribosyltransferase PARP3 (533 aa).

The segment at 1–30 (MAPKPKPWVQTEGPEKKKGRQAGREEDPFR) is disordered. An N6-(ADP-ribosyl)lysine modification is found at K6. 4 positions are modified to ADP-ribosyl glutamic acid: E12, E15, E26, and E34. Positions 14 to 20 (PEKKKGR) match the Nuclear localization signal motif. The residue at position 37 (K37) is an N6-(ADP-ribosyl)lysine. Positions 59–150 (GTQVYEDYNC…DHFVSHPGKY (92 aa)) constitute a WGR domain. D141 is subject to ADP-ribosyl aspartic acid. E163 is subject to ADP-ribosyl glutamic acid. The PARP alpha-helical domain maps to 182-300 (PCSLDPATQK…DIELAQALQA (119 aa)). D210 bears the ADP-ribosyl aspartic acid mark. ADP-ribosyl glutamic acid is present on residues E231, E309, E310, E344, and E449. Positions 313-533 (HPLDRDYQLL…RLRYLLEVHL (221 aa)) constitute a PARP catalytic domain. The segment at 454–482 (TDNPSLKSPPPGFDSVIARGHTEPDPTQD) is disordered.

Belongs to the ARTD/PARP family. Interacts with PARP1; leading to activate PARP1 in absence of DNA. Interacts with PRKDC. Interacts with XRCC5/Ku80; the interaction is dependent on nucleic acids. Interacts with XRCC6/Ku70; the interaction is dependent on nucleic acids. Interacts with EZH2, HDAC1, HDAC2, SUZ12, YY1, LRIG3 and LIG4. In terms of processing, auto-mono-ADP-ribosylated. In terms of tissue distribution, widely expressed; the highest levels are in the kidney, skeletal muscle, liver, heart and spleen; also detected in pancreas, lung, placenta, brain, leukocytes, colon, small intestine, ovary, testis, prostate and thymus.

It localises to the nucleus. It is found in the chromosome. Its subcellular location is the cytoplasm. The protein resides in the cytoskeleton. The protein localises to the microtubule organizing center. It localises to the centrosome. It is found in the centriole. It carries out the reaction L-aspartyl-[protein] + NAD(+) = 4-O-(ADP-D-ribosyl)-L-aspartyl-[protein] + nicotinamide. The enzyme catalyses L-glutamyl-[protein] + NAD(+) = 5-O-(ADP-D-ribosyl)-L-glutamyl-[protein] + nicotinamide. It catalyses the reaction L-lysyl-[protein] + NAD(+) = N(6)-(ADP-D-ribosyl)-L-lysyl-[protein] + nicotinamide + H(+). Mono-ADP-ribosyltransferase activity of PARP3 is selectively inhibited by ME0328 compound; ME0328 does not inhibit other ARTD/PARP enzymes, such as PARP1. Mono-ADP-ribosyltransferase is strongly inhibited by KU0058948 compound. Functionally, mono-ADP-ribosyltransferase that mediates mono-ADP-ribosylation of target proteins and plays a key role in the response to DNA damage. Mediates mono-ADP-ribosylation of glutamate, aspartate or lysine residues on target proteins. In contrast to PARP1 and PARP2, it is not able to mediate poly-ADP-ribosylation. Involved in DNA repair by mediating mono-ADP-ribosylation of a limited number of acceptor proteins involved in chromatin architecture and in DNA metabolism, such as histone H2B, XRCC5 and XRCC6. ADP-ribosylation follows DNA damage and appears as an obligatory step in a detection/signaling pathway leading to the reparation of DNA strand breaks. Involved in single-strand break repair by catalyzing mono-ADP-ribosylation of histone H2B on 'Glu-2' (H2BE2ADPr) of nucleosomes containing nicked DNA. Cooperates with the XRCC5-XRCC6 (Ku80-Ku70) heterodimer to limit end-resection thereby promoting accurate NHEJ. Suppresses G-quadruplex (G4) structures in response to DNA damage. Associates with a number of DNA repair factors and is involved in the response to exogenous and endogenous DNA strand breaks. Together with APLF, promotes the retention of the LIG4-XRCC4 complex on chromatin and accelerate DNA ligation during non-homologous end-joining (NHEJ). May link the DNA damage surveillance network to the mitotic fidelity checkpoint. Acts as a negative regulator of immunoglobulin class switch recombination, probably by controlling the level of AICDA /AID on the chromatin. In addition to proteins, also able to ADP-ribosylate DNA: mediates DNA mono-ADP-ribosylation of DNA strand break termini via covalent addition of a single ADP-ribose moiety to a 5'- or 3'-terminal phosphate residues in DNA containing multiple strand breaks. This chain is Protein mono-ADP-ribosyltransferase PARP3, found in Homo sapiens (Human).